The primary structure comprises 504 residues: MEELRGYLELDRSWQRDFLYTLILQEYIYSLAHDHGFNRTIFFENAGYEKKYSFLIVKRLITRMYQQNHLILSANDSNQNEFLGQKKNLYSQMISEGFAFIVEIPFSLQLLFSLEGKEIVKSRNLRSIHSIFPFLEDKFSHLNYVLDILIPHPVHLEILVQTIRYWTKDASSLHLLRFCLYEYRNWNSRISRKQYISFFSNRNQRLFLFLYNSHVCEYESIFIFLRNQPSHLRSTFSGAFLERIYFYEKIEHLVKVFTKNFQVILWFFKDTFMHYVRYQGKSFLASKGTSLLMIKWKYYLVNFWQCSFSVWSQPRRIYINXLXNHXLDFMXFLSSVRLNPSVVRIQMLEKSFIIDNAINTFDTRVPNIPMIGSFAKAKFCNIFGHPISKPVWAYLSDSDIIDRFGRICRSLSHYYSGSSRKKSLYRIKYILRLSCARTLARKHKSTVRTFLKRLGSEFLEEFFMEEEKVLSLILPRDSYTSQRLYRGRIWYLDIFCIHDLANHE.

It belongs to the intron maturase 2 family. MatK subfamily.

The protein resides in the plastid. The protein localises to the chloroplast. Usually encoded in the trnK tRNA gene intron. Probably assists in splicing its own and other chloroplast group II introns. In Nepenthes distillatoria (Pitcher plant), this protein is Maturase K.